A 281-amino-acid chain; its full sequence is CCAAT/enhancer-binding protein epsilon (281 aa).

The disordered stretch occupies residues 1–30 (MSHGTYYECEPRGGQQPLEFSGGRAGPGEL). Lys121 participates in a covalent cross-link: Glycyl lysine isopeptide (Lys-Gly) (interchain with G-Cter in SUMO2). Ser181 is subject to Phosphoserine. In terms of domain architecture, bZIP spans 204–267 (SLEYRLRRER…DTLRNLFRQI (64 aa)). The basic motif stretch occupies residues 208–245 (RLRRERNNIAVRKSRDKAKRRIMETQQKVLEYMAENER). A leucine-zipper region spans residues 246-267 (LRSRVDQLTQELDTLRNLFRQI).

This sequence belongs to the bZIP family. C/EBP subfamily. Binds DNA as a homodimer and as a heterodimer. Can form stable heterodimers with CEBPA, CEBPB and CEBPD. Interacts with GATA1 and SPI1. Interacts with SMARCD2.

The protein localises to the nucleus. In terms of biological role, transcriptional activator. C/EBP are DNA-binding proteins that recognize two different motifs: the CCAAT homology common to many promoters and the enhanced core homology common to many enhancers. Required for the promyelocyte-myelocyte transition in myeloid differentiation. The polypeptide is CCAAT/enhancer-binding protein epsilon (Cebpe) (Rattus norvegicus (Rat)).